The chain runs to 154 residues: Urease accessory protein UreE (154 aa).

Residues 135–154 (YGHGRTFGHDHGHAHDHHHA) form a disordered region.

Belongs to the UreE family.

The protein localises to the cytoplasm. Its function is as follows. Involved in urease metallocenter assembly. Binds nickel. Probably functions as a nickel donor during metallocenter assembly. The chain is Urease accessory protein UreE from Paracoccus denitrificans (strain Pd 1222).